Consider the following 185-residue polypeptide: dCTP deaminase (185 aa).

Residues 107 to 112 (KSTYAR), 131 to 133 (TLE), Q152, Y166, and Q176 contribute to the dCTP site. The active-site Proton donor/acceptor is E133.

Belongs to the dCTP deaminase family. Homotrimer.

It catalyses the reaction dCTP + H2O + H(+) = dUTP + NH4(+). It participates in pyrimidine metabolism; dUMP biosynthesis; dUMP from dCTP (dUTP route): step 1/2. Functionally, catalyzes the deamination of dCTP to dUTP. The chain is dCTP deaminase from Wolbachia pipientis wMel.